The primary structure comprises 576 residues: 60 kDa heat shock protein homolog 2, mitochondrial (576 aa).

The N-terminal 61 residues, 1 to 61 (MMRMFRYTNT…AVTMGPKGRN (61 aa)), are a transit peptide targeting the mitochondrion.

Belongs to the chaperonin (HSP60) family. First detectable expression is seen in the posterior part of the dorsal tracheal trunk at stage 14-15, which marks the beginning of terminal tracheation. In the larval gut, expression in proventriculus is stronger than in midgut and hindgut. Malpighian tubules shows low expression and late third instar larval imaginal disks and brain showed moderate expression. In larval ovary and testis, expression is strong in the posterior region.

The protein localises to the mitochondrion matrix. Prevents misfolding and promotes the refolding and proper assembly of unfolded polypeptides generated under stress conditions. Essential for proper development of trachea, spermatogonia and spermatocytes. This is 60 kDa heat shock protein homolog 2, mitochondrial (Hsp60C) from Drosophila melanogaster (Fruit fly).